A 427-amino-acid polypeptide reads, in one-letter code: Putative transporter YdfJ (427 aa).

Topologically, residues 1–7 are cytoplasmic; that stretch reads MDFQLYS. The next 2 helical transmembrane spans lie at 8 to 28 and 29 to 49; these read LGAA…AMAL and ILAM…AFIF. Residues 50–74 are Cytoplasmic-facing; that stretch reads GKMGDRIGRKKVLFITITMMGICTT. Residues 75–95 form a helical membrane-spanning segment; sequence LIGVLPTYAQIGVFAPILLVT. Residues 96 to 97 lie on the Periplasmic side of the membrane; it reads LR. Residues 98–118 form a helical membrane-spanning segment; the sequence is IIQGLGAGAEISGAGTMLAEY. The Cytoplasmic portion of the chain corresponds to 119–132; sequence APKGKRGIISSFVA. A helical membrane pass occupies residues 133–153; the sequence is MGTNCGTLSATAIWAFMFFIL. At 154–157 the chain is on the periplasmic side; it reads SKEE. Residues 158 to 178 traverse the membrane as a helical segment; that stretch reads LLAWGWRIPFLASVVVMVFAI. Residues 179-225 are Cytoplasmic-facing; it reads WLRMNLKESPVFEKVNDSNQPTAKPAPAGSMFQSKSFWLATGLRFGQ. A helical membrane pass occupies residues 226–246; it reads AGNSGLIQTFLAGYLVQTLLF. The Periplasmic portion of the chain corresponds to 247–251; sequence NKAIP. A helical transmembrane segment spans residues 252–272; that stretch reads TDALMISSILGFMTIPFLGWL. The Cytoplasmic portion of the chain corresponds to 273–279; sequence SDKIGRR. The chain crosses the membrane as a helical span at residues 280-300; the sequence is IPYIIMNTSAIVLAWPMLSII. Topologically, residues 301-307 are periplasmic; it reads VDKSYAP. The chain crosses the membrane as a helical span at residues 308 to 328; that stretch reads STIMVALIVIHNCAVLGLFAL. Residues 329–351 lie on the Cytoplasmic side of the membrane; that stretch reads ENITMAEMFGCKNRFTRMAISKE. A helical transmembrane segment spans residues 352 to 372; sequence IGGLIASGFGPILAGIFCTMT. Position 373 (glutamate 373) is a topological domain, periplasmic. The chain crosses the membrane as a helical span at residues 374–394; sequence SWYPIAIMIMAYSVIGLISAL. Residues 395–427 lie on the Cytoplasmic side of the membrane; it reads KMPEVKDRDLSALEDAAEDQPRVVRAAQPSRSL.

This sequence belongs to the major facilitator superfamily. Metabolite:H+ Symporter (MHS) family (TC 2.A.1.6) family.

The protein resides in the cell inner membrane. In terms of biological role, when overexpressed in human HEK-293 cells forms an inward rectifying potassium channel. The chain is Putative transporter YdfJ (ydfJ) from Escherichia coli (strain K12).